The chain runs to 411 residues: Envelope glycoprotein G (411 aa).

The N-terminal stretch at 1 to 19 (MLTVLAALSLLSLLTSATG) is a signal peptide. 5 N-linked (GlcNAc...) asparagine; by host glycosylation sites follow: N83, N138, N222, N245, and N317. Composition is skewed to polar residues over residues 306-327 (VPSS…SNSP) and 334-345 (SVNSDDSTHTGG). Residues 306–345 (VPSSAAESSLENQSTQEESNSPEVAHLRSVNSDDSTHTGG) form a disordered region. The helical transmembrane segment at 364–384 (LALIGLGTCAMIGLIVYICVL) threads the bilayer.

The protein belongs to the alphaherpesvirinae glycoprotein G family.

The protein localises to the virion membrane. Chemokine-binding protein that inhibits neutrophils' chemotaxis. The chain is Envelope glycoprotein G (gG) from Equine herpesvirus 1 (strain Kentucky A) (EHV-1).